Consider the following 117-residue polypeptide: Large ribosomal subunit protein bL19 (117 aa).

This sequence belongs to the bacterial ribosomal protein bL19 family.

This protein is located at the 30S-50S ribosomal subunit interface and may play a role in the structure and function of the aminoacyl-tRNA binding site. This is Large ribosomal subunit protein bL19 from Vibrio cholerae serotype O1 (strain ATCC 39541 / Classical Ogawa 395 / O395).